A 120-amino-acid polypeptide reads, in one-letter code: Large ribosomal subunit protein bL19 (120 aa).

Belongs to the bacterial ribosomal protein bL19 family.

Its function is as follows. This protein is located at the 30S-50S ribosomal subunit interface and may play a role in the structure and function of the aminoacyl-tRNA binding site. This chain is Large ribosomal subunit protein bL19, found in Geobacillus kaustophilus (strain HTA426).